Here is a 536-residue protein sequence, read N- to C-terminus: Maintenance of mitochondrial morphology protein 1 (536 aa).

The Lumenal portion of the chain corresponds to 1–25; the sequence is MAGPSNQTQPPPPVLTQPSLSFTQG. The helical transmembrane segment at 26 to 46 threads the bilayer; sequence LLVGQLSVVLLIGAFIKFFIF. The Cytoplasmic portion of the chain corresponds to 47-536; sequence GEAPPHPSRN…GSMPDPVVVT (490 aa). 4 disordered regions span residues 52–135, 275–331, 416–467, and 505–536; these read HPSR…SHQP, GPGT…ATAA, GRTG…GGSM, and YGGA…VVVT. Composition is skewed to polar residues over residues 69–81, 88–105, and 112–121; these read YSLN…SSPR, STSN…NTRS, and YSATPTNPTS. The span at 122–132 shows a compositional bias: basic residues; that stretch reads KHSRSRPHHSS. Residues 134-409 form the SMP-LTD domain; that stretch reads QPESLDWFNV…EPRVQVVGLP (276 aa). Low complexity predominate over residues 321–331; sequence TNTNTAGATAA. 2 stretches are compositionally biased toward gly residues: residues 442 to 467 and 507 to 517; these read TAGG…GGSM and GAQGGGGGGGR.

It belongs to the MMM1 family. Homodimer. Component of the ER-mitochondria encounter structure (ERMES) or MDM complex, composed of MMM1, MDM10, MDM12 and MDM34. An MMM1 homodimer associates with one molecule of MDM12 on each side in a pairwise head-to-tail manner, and the SMP-LTD domains of MMM1 and MDM12 generate a continuous hydrophobic tunnel for phospholipid trafficking.

The protein localises to the endoplasmic reticulum membrane. Its function is as follows. Component of the ERMES/MDM complex, which serves as a molecular tether to connect the endoplasmic reticulum (ER) and mitochondria. Components of this complex are involved in the control of mitochondrial shape and protein biogenesis, and function in nonvesicular lipid trafficking between the ER and mitochondria. The MDM12-MMM1 subcomplex functions in the major beta-barrel assembly pathway that is responsible for biogenesis of all outer membrane beta-barrel proteins, and acts in a late step after the SAM complex. The MDM10-MDM12-MMM1 subcomplex further acts in the TOM40-specific pathway after the action of the MDM12-MMM1 complex. Essential for establishing and maintaining the structure of mitochondria and maintenance of mtDNA nucleoids. This Ajellomyces dermatitidis (strain ER-3 / ATCC MYA-2586) (Blastomyces dermatitidis) protein is Maintenance of mitochondrial morphology protein 1.